Consider the following 235-residue polypeptide: Pyridoxine 5'-phosphate synthase (235 aa).

Asn-6 lines the 3-amino-2-oxopropyl phosphate pocket. 8–9 provides a ligand contact to 1-deoxy-D-xylulose 5-phosphate; the sequence is DH. Arg-17 is a 3-amino-2-oxopropyl phosphate binding site. The Proton acceptor role is filled by His-42. 2 residues coordinate 1-deoxy-D-xylulose 5-phosphate: Arg-44 and His-49. The Proton acceptor role is filled by Glu-69. A 1-deoxy-D-xylulose 5-phosphate-binding site is contributed by Thr-99. The Proton donor role is filled by His-189. Residues Gly-190 and 211–212 each bind 3-amino-2-oxopropyl phosphate; that span reads GH.

Belongs to the PNP synthase family. In terms of assembly, homooctamer; tetramer of dimers.

It is found in the cytoplasm. It carries out the reaction 3-amino-2-oxopropyl phosphate + 1-deoxy-D-xylulose 5-phosphate = pyridoxine 5'-phosphate + phosphate + 2 H2O + H(+). It functions in the pathway cofactor biosynthesis; pyridoxine 5'-phosphate biosynthesis; pyridoxine 5'-phosphate from D-erythrose 4-phosphate: step 5/5. Functionally, catalyzes the complicated ring closure reaction between the two acyclic compounds 1-deoxy-D-xylulose-5-phosphate (DXP) and 3-amino-2-oxopropyl phosphate (1-amino-acetone-3-phosphate or AAP) to form pyridoxine 5'-phosphate (PNP) and inorganic phosphate. The sequence is that of Pyridoxine 5'-phosphate synthase from Chlorobium chlorochromatii (strain CaD3).